We begin with the raw amino-acid sequence, 1362 residues long: Bromodomain-containing protein 4 (1362 aa).

Positions 1-58 (MSAESGPGTRLRNLPVMGDGLETSQMSTTQAQAQPQPANAASTNPPPPETSNPNKPKR) are disordered. Over residues 23–43 (TSQMSTTQAQAQPQPANAAST) the composition is skewed to low complexity. Positions 58–164 (RQTNQLQYLL…KLFLQKINEL (107 aa)) constitute a Bromo 1 domain. K99 is covalently cross-linked (Glycyl lysine isopeptide (Lys-Gly) (interchain with G-Cter in SUMO2)). Disordered stretches follow at residues 174–229 (VQAK…PAVT), 242–352 (VPPQ…KVSE), and 463–615 (EPVV…YEEK). Low complexity predominate over residues 197–211 (PNTTQASTPPQTQTP). 2 stretches are compositionally biased toward pro residues: residues 212–227 (QPNP…PFPA) and 243–266 (PPQP…PAPQ). The segment covering 320 to 336 (QRRESSRPVKPPKKDVP) has biased composition (basic and acidic residues). One can recognise a Bromo 2 domain in the interval 348–457 (SKVSEQLKCC…DVFEMRFAKM (110 aa)). S470 bears the Phosphoserine mark. Over residues 478-497 (KVVAPPSSSDSSSDSSSDSD) the composition is skewed to low complexity. Phosphoserine; by CK2 occurs at positions 484, 488, 492, 494, 498, 499, and 503. The tract at residues 484–503 (SSSDSSSDSSSDSDSSTDDS) is NPS region. The BID region stretch occupies residues 524–579 (QLAALSQPQQNKPKKKEKDKKEKKKEKHKRKEEVEENKKSKAKEPPPKKTKKNNSS). Residues 535–553 (KPKKKEKDKKEKKKEKHKR) show a composition bias toward basic residues. Over residues 554–570 (KEEVEENKKSKAKEPPP) the composition is skewed to basic and acidic residues. K585 is covalently cross-linked (Glycyl lysine isopeptide (Lys-Gly) (interchain with G-Cter in SUMO2)). Residues 600–682 (ESEEEDKCKP…SCLRKKRKPQ (83 aa)) enclose the NET domain. Position 601 is a phosphoserine (S601). The span at 605–615 (DKCKPMSYEEK) shows a compositional bias: basic and acidic residues. Glycyl lysine isopeptide (Lys-Gly) (interchain with G-Cter in SUMO2) cross-links involve residues K645 and K694. Residues 674–1100 (CLRKKRKPQA…PKKQELRAAS (427 aa)) form a disordered region. Positions 699 to 712 (SSSESESSSESSSS) are enriched in low complexity. The span at 724–744 (KSKKKGHPGREQKKHHHHHHQ) shows a compositional bias: basic residues. Pro residues-rich tracts occupy residues 751–785 (APVP…PPSM), 833–846 (PELP…PEHS), and 881–890 (PPKPARPPAV). A compositionally biased stretch (low complexity) spans 926 to 936 (MQMQLYLQQLQ). 3 stretches are compositionally biased toward pro residues: residues 953–964 (QPPPPLPPPPHP), 973–996 (QPPP…PPRP), and 1010–1034 (QPPP…PQPA). Basic residues predominate over residues 1041-1050 (QHHHSPRHHK). The interval 1047-1362 (RHHKSDPYST…LLSIFEENLF (316 aa)) is C-terminal (CTD) region. A Glycyl lysine isopeptide (Lys-Gly) (interchain with G-Cter in SUMO2) cross-link involves residue K1050. Positions 1071–1091 (PQMSQFQSLTHQSPPQQNVQP) are enriched in polar residues. K1111 is subject to N6-acetyllysine; alternate. K1111 is covalently cross-linked (Glycyl lysine isopeptide (Lys-Gly) (interchain with G-Cter in SUMO1); alternate). K1111 participates in a covalent cross-link: Glycyl lysine isopeptide (Lys-Gly) (interchain with G-Cter in SUMO2); alternate. A disordered region spans residues 1116 to 1339 (HSPIIRSEPF…KREQERRRRE (224 aa)). Residues S1117 and S1126 each carry the phosphoserine modification. Residues 1175 to 1196 (PDKDKQKQEPKTPVAPKKDLKI) show a composition bias toward basic and acidic residues. K1197 participates in a covalent cross-link: Glycyl lysine isopeptide (Lys-Gly) (interchain with G-Cter in SUMO2). Phosphoserine is present on residues S1201 and S1204. Residues 1211–1223 (TTPSSTAKSSSDS) are compositionally biased toward low complexity. Basic and acidic residues predominate over residues 1225 to 1284 (EQFRRAAREKEEREKALKAQAEHAEKEKERLRQERMRSREDEDALEQARRAHEEARRRQE). Residues 1285–1313 (QQQQQRQEQQQQQQQQAAAVAAAATPQAQ) are compositionally biased toward low complexity. Residues 1323 to 1339 (QQRELARKREQERRRRE) are compositionally biased toward basic and acidic residues.

The protein belongs to the BET family. As to quaternary structure, interacts with p53/TP53; the interaction is direct. Interacts (via CTD region) with CDK9 and CCNT1, acting as an associated component of P-TEFb complex. Interacts with RELA (when acetylated at 'Lys-310'). Interacts (via NET domain) with NSD3, CHD4, BICRA and ATAD5. The interaction with BICRA bridges BRD4 to the GBAF complex. Interacts (via NET domain) with JMJD6 (via JmjC and N-terminal domains); the interaction is stronger in presence of ssRNA and recruits JMJD6 on distal enhancers. Interacts with NSD3. Interacts with NIPBL. Interacts with SMC2. Interacts with NCAPD3. In terms of assembly, (Microbial infection) Interacts with bovine papillomavirus type 1 regulatory protein E2. This interactions may serve for the tethering of viral genomes to host mitotic chromosomes allowing successful partitioning of the viral genome during cell division. As to quaternary structure, (Microbial infection) Interacts with Epstein-Barr virus (EBV) protein EBNA1; this interaction facilitates transcriptional activation by EBNA1. (Microbial infection) Interacts with human herpes virus-8 (HHV-8) protein LANA. In terms of processing, phosphorylation by CK2 disrupt the intramolecular binding between the bromo domain 2 and the NPS region and promotes binding between the NPS and the BID regions, leading to activate the protein and promote binding to acetylated histones. In absence of phosphorylation, BRD4 does not localize to p53/TP53 target gene promoters, phosphorylation promoting recruitment to p53/TP53 target promoters. In terms of tissue distribution, ubiquitously expressed.

Its subcellular location is the nucleus. The protein resides in the chromosome. Inhibited by JQ1, a thieno-triazolo-1,4-diazepine derivative, which specifically inhibits members of the BET family (BRD2, BRD3 and BRD4). The first bromo domain is inhibited by GSK778 (iBET-BD1), which specifically inhibits the first bromo domain of members of the BET family (BRD2, BRD3 and BRD4). The second bromo domain is inhibited by ABBV-744, which specifically inhibits the second bromo domain of members of the BET family (BRD2, BRD3 and BRD4). The second bromo domain is inhibited by GSK046 (iBET-BD2), which specifically inhibits the second bromo domain of members of the BET family (BRD2, BRD3 and BRD4). Its function is as follows. Chromatin reader protein that recognizes and binds acetylated histones and plays a key role in transmission of epigenetic memory across cell divisions and transcription regulation. Remains associated with acetylated chromatin throughout the entire cell cycle and provides epigenetic memory for postmitotic G1 gene transcription by preserving acetylated chromatin status and maintaining high-order chromatin structure. During interphase, plays a key role in regulating the transcription of signal-inducible genes by associating with the P-TEFb complex and recruiting it to promoters. Also recruits P-TEFb complex to distal enhancers, so called anti-pause enhancers in collaboration with JMJD6. BRD4 and JMJD6 are required to form the transcriptionally active P-TEFb complex by displacing negative regulators such as HEXIM1 and 7SKsnRNA complex from P-TEFb, thereby transforming it into an active form that can then phosphorylate the C-terminal domain (CTD) of RNA polymerase II. Regulates differentiation of naive CD4(+) T-cells into T-helper Th17 by promoting recruitment of P-TEFb to promoters. Promotes phosphorylation of 'Ser-2' of the C-terminal domain (CTD) of RNA polymerase II. According to a report, directly acts as an atypical protein kinase and mediates phosphorylation of 'Ser-2' of the C-terminal domain (CTD) of RNA polymerase II; these data however need additional evidences in vivo. In addition to acetylated histones, also recognizes and binds acetylated RELA, leading to further recruitment of the P-TEFb complex and subsequent activation of NF-kappa-B. Also acts as a regulator of p53/TP53-mediated transcription: following phosphorylation by CK2, recruited to p53/TP53 specific target promoters. Acts as a chromatin insulator in the DNA damage response pathway. Inhibits DNA damage response signaling by recruiting the condensin-2 complex to acetylated histones, leading to chromatin structure remodeling, insulating the region from DNA damage response by limiting spreading of histone H2AX/H2A.x phosphorylation. The protein is Bromodomain-containing protein 4 (BRD4) of Homo sapiens (Human).